We begin with the raw amino-acid sequence, 141 residues long: SsrA-binding protein (141 aa).

It belongs to the SmpB family.

The protein resides in the cytoplasm. In terms of biological role, required for rescue of stalled ribosomes mediated by trans-translation. Binds to transfer-messenger RNA (tmRNA), required for stable association of tmRNA with ribosomes. tmRNA and SmpB together mimic tRNA shape, replacing the anticodon stem-loop with SmpB. tmRNA is encoded by the ssrA gene; the 2 termini fold to resemble tRNA(Ala) and it encodes a 'tag peptide', a short internal open reading frame. During trans-translation Ala-aminoacylated tmRNA acts like a tRNA, entering the A-site of stalled ribosomes, displacing the stalled mRNA. The ribosome then switches to translate the ORF on the tmRNA; the nascent peptide is terminated with the 'tag peptide' encoded by the tmRNA and targeted for degradation. The ribosome is freed to recommence translation, which seems to be the essential function of trans-translation. This Ureaplasma parvum serovar 3 (strain ATCC 27815 / 27 / NCTC 11736) protein is SsrA-binding protein.